The following is a 93-amino-acid chain: MALVRSLFSAKKILGGSLVKTSKAPPKGFLAVYVGESQKKQRHFVPVSYLNQPLFQDLLSKCEEEFGFDHPMGGLTIPCPVDTFISITSQLQG.

Belongs to the ARG7 family. As to quaternary structure, interacts with PP2C-D1. Higher expression in thermo-responsive cultivars (e.g. cv. Alst-1, cv. Ang-0 and cv. Com-0) than in low thermo-responsive cultivars (e.g. cv. Dja-1, cv. El-0 and cv. Kon).

It localises to the cell membrane. In terms of biological role, provide a mechanistic link between auxin and plasma membrane H(+)-ATPases (PM H(+)-ATPases, e.g. AHA1 and AHA2), and triggers PM H(+)-ATPases activity by promoting phosphorylation of their C-terminal autoinhibitory domain as a result of PP2C-D subfamily of type 2C phosphatases inhibition, thus leading to the acidification of the apoplast and the facilitation of solutes and water uptake to drive cell expansion. Functions as a positive effectors of cell expansion through modulation of auxin transport. Involved in thermo-responsiveness of plant architecture. Enhances plasma membrane H(+)-ATPase. Probably involved in light intensity mediated root development. This Arabidopsis thaliana (Mouse-ear cress) protein is Auxin-responsive protein SAUR26.